Here is a 116-residue protein sequence, read N- to C-terminus: UPF0342 protein CTC_01059 (116 aa).

This sequence belongs to the UPF0342 family.

In Clostridium tetani (strain Massachusetts / E88), this protein is UPF0342 protein CTC_01059.